Consider the following 674-residue polypeptide: MSVKDEINKLIETINYHNERYYNQDSPEISDYEYDKLMKELISLEEEHPELKRIDSPTNRVGGKPLDKFNQIVHKTPMLSLSNAFSEQDLRDFDKRVQEYVGENVEYVVEFKIDGLSVGLTYNNGEFEKGATRGDGVVGEDISQNLMTVKSIPLKINDKKELIVRGEVYISKDNFRKVNEQQEEQEQPLFANPRNLAAGSLRQLDPKLTAKRPLDIFVFNMENIEEYDLESHSESLEYLEKLGFSVSQSYKVCKSIDEVIEHIEYWTDNRGNLDYEIDGMVIKVNNIKQRDEMGYTAKSPRWAIAYKFPAEKKKTKIVDIIVEVGRTGTITPSAILEPVRLAGTTVSRATLHNEDYIREKDIKINDTVLVQKAGDIIPQVLEVIKEERTGDEIDFKMPEKCPVCSEPTIRLEGEAAVKCINMSCPAQIRRGIIHFVSRDAMNIDGLGESIITLLLNEKIIQDVSDLYYIKKEDVVDLERMGEKSADNLINSIEKSKENDLWRLINGLGIKFIGVKAAKILAYNFKDLDEVISATSEQLEELEEFGSIMANSVVEFFKEDKNMNVINKLKNVGVNTKSLDNTGEKVEKIFEGMKIVLTGTLPTLKRNDAKEMIEKRGGKATSSVSKSTTFVLAGEEAGSKLTKANDLGIKVIDEERFLELLKLSSKDEVKAVLES.

Residues 31-35, 80-81, and glutamate 110 each bind NAD(+); these read DYEYD and SL. Catalysis depends on lysine 112, which acts as the N6-AMP-lysine intermediate. The NAD(+) site is built by arginine 133, glutamate 167, lysine 283, and lysine 307. Zn(2+)-binding residues include cysteine 401, cysteine 404, cysteine 419, and cysteine 424. One can recognise a BRCT domain in the interval 584 to 673; sequence KVEKIFEGMK…SKDEVKAVLE (90 aa).

It belongs to the NAD-dependent DNA ligase family. LigA subfamily. Mg(2+) serves as cofactor. It depends on Mn(2+) as a cofactor.

The catalysed reaction is NAD(+) + (deoxyribonucleotide)n-3'-hydroxyl + 5'-phospho-(deoxyribonucleotide)m = (deoxyribonucleotide)n+m + AMP + beta-nicotinamide D-nucleotide.. DNA ligase that catalyzes the formation of phosphodiester linkages between 5'-phosphoryl and 3'-hydroxyl groups in double-stranded DNA using NAD as a coenzyme and as the energy source for the reaction. It is essential for DNA replication and repair of damaged DNA. This chain is DNA ligase, found in Clostridioides difficile (strain 630) (Peptoclostridium difficile).